A 333-amino-acid polypeptide reads, in one-letter code: Delta(9)-fatty-acid desaturase fat-5 (333 aa).

Transmembrane regions (helical) follow at residues 42–62 (NVALFVALHIGALVGLYQLVF), 66–86 (WATVGWVFLLHTLGSMGVTGG), 187–207 (LPLVGIFCFALPTFIPVVLWG), and 210–230 (AFIAFYTAALFRYCFTLHATW).

This sequence belongs to the fatty acid desaturase type 1 family. Expressed in the intestine in adult worms and in all four larval stages. Additional expression in the pharynx and tail cells after hatching and throughout the lifespan.

The protein resides in the membrane. The catalysed reaction is hexadecanoyl-CoA + 2 Fe(II)-[cytochrome b5] + O2 + 2 H(+) = (9Z)-hexadecenoyl-CoA + 2 Fe(III)-[cytochrome b5] + 2 H2O. The enzyme catalyses tetradecanoyl-CoA + 2 Fe(II)-[cytochrome b5] + O2 + 2 H(+) = (9Z)-tetradecenoyl-CoA + 2 Fe(III)-[cytochrome b5] + 2 H2O. It carries out the reaction heptadecanoyl-CoA + 2 Fe(II)-[cytochrome b5] + O2 + 2 H(+) = (9Z)-heptadecenoyl-CoA + 2 Fe(III)-[cytochrome b5] + 2 H2O. It catalyses the reaction pentadecanoyl-CoA + 2 Fe(II)-[cytochrome b5] + O2 + 2 H(+) = (9Z)-pentadecenoyl-CoA + 2 Fe(III)-[cytochrome b5] + 2 H2O. The protein operates within lipid metabolism; monounsaturated fatty acid biosynthesis. Delta(9)-fatty acid desaturase that acts preferentially on palmitoyl-CoA (hexadecanoyl-CoA) producing the monounsaturated palmitoleoyl-CoA ((9Z)-hexadecenoyl-CoA), which can be elongated to (11Z)-octadecenoyl-CoA (the most abundant monounsaturated fatty acid in Caenorhabditis elegans phospholipids and triacylglycerols). Also acts on pentadecanoyl-CoA, heptadecanoyl-CoA and myristoyl-CoA (tetradecanoyl-CoA), the monounsaturated fatty acids (MUFAs) produced are further used as substrates to synthesize polyunsaturated fatty acids (PUFAs) by several other desaturases and elongases. Unlike plants, Caenorhabditis elegans desaturases seem to use fatty acyl-CoAs as substrates. The chain is Delta(9)-fatty-acid desaturase fat-5 (fat-5) from Caenorhabditis elegans.